The following is a 129-amino-acid chain: Small ribosomal subunit protein uS11 (129 aa).

It belongs to the universal ribosomal protein uS11 family. In terms of assembly, part of the 30S ribosomal subunit. Interacts with proteins S7 and S18. Binds to IF-3.

Functionally, located on the platform of the 30S subunit, it bridges several disparate RNA helices of the 16S rRNA. Forms part of the Shine-Dalgarno cleft in the 70S ribosome. The protein is Small ribosomal subunit protein uS11 of Staphylococcus saprophyticus subsp. saprophyticus (strain ATCC 15305 / DSM 20229 / NCIMB 8711 / NCTC 7292 / S-41).